The primary structure comprises 167 residues: uncharacterized protein (167 aa).

Positions 28-59 (LTGIREELKADIDETRLIAESVLEEKEKKVVE) form a coiled coil.

This is an uncharacterized protein from Aquifex aeolicus (strain VF5).